The following is a 555-amino-acid chain: Probable metabolite transport protein YDR387C (555 aa).

Residues 1-39 lie on the Cytoplasmic side of the membrane; it reads MSTDESEDVYSDLYSIISQVTSNTANDIEQLPYALTFKT. A helical membrane pass occupies residues 40-60; sequence SLIFVGATIGGLLFGYDTGVI. Topologically, residues 61-83 are extracellular; the sequence is SGVLLSLKPEDLSLVVLTDVQKE. A helical transmembrane segment spans residues 84-104; sequence LITSSTSVGSFFGSILAFPLA. Residues 105–118 are Cytoplasmic-facing; sequence DRYGRRITLAICCS. The chain crosses the membrane as a helical span at residues 119–139; the sequence is IFILAAIGMAIARTLTFLICG. A topological domain (extracellular) is located at residue arginine 140. The helical transmembrane segment at 141-161 threads the bilayer; sequence LLVGIAVGVSAQCVPLFLSEI. Over 162–168 the chain is Cytoplasmic; sequence SPSRIRG. Residues 169-189 traverse the membrane as a helical segment; that stretch reads FMLTLNIIAITGGQLVSYVIA. Residues 190–200 are Extracellular-facing; the sequence is SLMKEIDNSWR. Residues 201–221 traverse the membrane as a helical segment; sequence YLFALSAIPAILFLSILDFIP. Topologically, residues 222–356 are cytoplasmic; that stretch reads ESPRWSISKG…TIRALIVGCM (135 aa). The tract at residues 289–313 is disordered; the sequence is SSTSGTLSPPNIKRLSSNTERTSNT. A helical membrane pass occupies residues 357–377; that stretch reads LMFFQQITGFNAFMYYAAIIF. Over 378-384 the chain is Extracellular; it reads SKFNIKN. A helical transmembrane segment spans residues 385–405; sequence PLLPPILIASTNFIFTFFAMY. Residues 406–413 lie on the Cytoplasmic side of the membrane; it reads TMDSLGRR. Residues 414–434 form a helical membrane-spanning segment; sequence AILLRTILIMTVGLLLCSVGF. Residues 435 to 440 lie on the Extracellular side of the membrane; it reads GHDQVN. A helical membrane pass occupies residues 441-461; sequence LLLISVVIYVAAYASAMGSVP. The Cytoplasmic portion of the chain corresponds to 462–474; sequence WTCVEFLPLNRRS. The helical transmembrane segment at 475–497 threads the bilayer; the sequence is FGASCIACTNWLTNAFVSMTYLS. Over 498-506 the chain is Extracellular; it reads TINTIGDEN. The helical transmembrane segment at 507–527 threads the bilayer; sequence TMLIFAFFTVCAWFFVYFWYP. The Cytoplasmic segment spans residues 528–555; that stretch reads EVKGLSLEEVGRVFDNGIDVHYVFRTYH.

The protein belongs to the major facilitator superfamily. Sugar transporter (TC 2.A.1.1) family.

The protein resides in the membrane. The polypeptide is Probable metabolite transport protein YDR387C (Saccharomyces cerevisiae (strain ATCC 204508 / S288c) (Baker's yeast)).